The following is a 514-amino-acid chain: Maturase K (514 aa).

The protein belongs to the intron maturase 2 family. MatK subfamily.

It is found in the plastid. The protein resides in the chloroplast. In terms of biological role, usually encoded in the trnK tRNA gene intron. Probably assists in splicing its own and other chloroplast group II introns. This is Maturase K from Drosophyllum lusitanicum (Portuguese sundew).